Consider the following 339-residue polypeptide: Phosphoribosylformylglycinamidine cyclo-ligase (339 aa).

The protein belongs to the AIR synthase family.

It is found in the cytoplasm. It carries out the reaction 2-formamido-N(1)-(5-O-phospho-beta-D-ribosyl)acetamidine + ATP = 5-amino-1-(5-phospho-beta-D-ribosyl)imidazole + ADP + phosphate + H(+). It functions in the pathway purine metabolism; IMP biosynthesis via de novo pathway; 5-amino-1-(5-phospho-D-ribosyl)imidazole from N(2)-formyl-N(1)-(5-phospho-D-ribosyl)glycinamide: step 2/2. The sequence is that of Phosphoribosylformylglycinamidine cyclo-ligase from Oceanobacillus iheyensis (strain DSM 14371 / CIP 107618 / JCM 11309 / KCTC 3954 / HTE831).